The chain runs to 274 residues: Nuclease (274 aa).

An N-terminal signal peptide occupies residues 1 to 24; sequence MGICGKLGVAALVALIVGCSPVQS. His-124 (proton acceptor) is an active-site residue. Positions 155, 246, 249, 255, 256, 265, and 269 each coordinate Mn(2+).

It belongs to the DNA/RNA non-specific endonuclease family. Monomer. Mn(2+) serves as cofactor. Mg(2+) is required as a cofactor. The cofactor is Ca(2+). Requires Co(2+) as cofactor. The N-terminus is blocked.

Its subcellular location is the periplasm. In terms of biological role, catalyzes the degradation of both RNA and DNA; has the potential to act as an endonuclease. The protein is Nuclease (nucA) of Nostoc sp. (strain PCC 7120 / SAG 25.82 / UTEX 2576).